Here is a 220-residue protein sequence, read N- to C-terminus: UPF0319 protein YccT (220 aa).

The signal sequence occupies residues 1-20 (MKTGALTTFLALCLPVTVFA).

This sequence belongs to the UPF0319 family.

The chain is UPF0319 protein YccT from Salmonella choleraesuis (strain SC-B67).